Here is a 210-residue protein sequence, read N- to C-terminus: Probable GTP-binding protein EngB (210 aa).

The EngB-type G domain occupies 30–204; it reads QGYEVAFAGR…YRVLADWMEL (175 aa). GTP is bound by residues 38-45, 64-68, 82-85, 149-152, and 182-185; these read GRSNAGKS, GRTQL, DLPG, TKAD, and LFSA. Mg(2+)-binding residues include Ser45 and Thr66.

The protein belongs to the TRAFAC class TrmE-Era-EngA-EngB-Septin-like GTPase superfamily. EngB GTPase family. Requires Mg(2+) as cofactor.

Necessary for normal cell division and for the maintenance of normal septation. The chain is Probable GTP-binding protein EngB from Pseudomonas putida (strain ATCC 47054 / DSM 6125 / CFBP 8728 / NCIMB 11950 / KT2440).